Consider the following 398-residue polypeptide: MNEQSPALRNFTINFGPQHPAAHGVLRLVLELDGEVVERVDPHIGLLHRGTEKLIETKTYLQAMPYFDRLDYVAPMNQEHAFCLAAERLLGIEVPRRGQLIRVLYSEIGRLLSHLLNVTTQAMDVGALTPPLWGFEEREKLMVFYERASGSRMHANYFRIGGVHQDLPPKLVDDIDAFCDPFLKVVDDLDQLLTGNRIFKQRNVDIGVVTLKQAWEWGFSGVMVRGSGAAWDLRKSQPYDVYAEMEFDIPIGKNGDCYDRYLIRMEEMRQSVRIMKQCIAKLRAPDGQGPVLITDNKIAPPRRGEMKRSMEALIHHFKLYTEGVHVPAGEIYAAVEAPKGEFGVYLVADGTNKPYKCKIRAPGFAHLQAMDFLCRGHLLADVSAILGSLDIVFGEVDR.

This sequence belongs to the complex I 49 kDa subunit family. As to quaternary structure, NDH-1 is composed of 14 different subunits. Subunits NuoB, C, D, E, F, and G constitute the peripheral sector of the complex.

The protein localises to the cell inner membrane. The enzyme catalyses a quinone + NADH + 5 H(+)(in) = a quinol + NAD(+) + 4 H(+)(out). NDH-1 shuttles electrons from NADH, via FMN and iron-sulfur (Fe-S) centers, to quinones in the respiratory chain. The immediate electron acceptor for the enzyme in this species is believed to be ubiquinone. Couples the redox reaction to proton translocation (for every two electrons transferred, four hydrogen ions are translocated across the cytoplasmic membrane), and thus conserves the redox energy in a proton gradient. In Bradyrhizobium sp. (strain ORS 278), this protein is NADH-quinone oxidoreductase subunit D.